The chain runs to 865 residues: Leucine--tRNA ligase (865 aa).

Residues 41–51 (PYPSGRIHMGH) carry the 'HIGH' region motif. Residues 614–618 (KMSKS) carry the 'KMSKS' region motif. An ATP-binding site is contributed by Lys-617.

It belongs to the class-I aminoacyl-tRNA synthetase family.

It localises to the cytoplasm. The enzyme catalyses tRNA(Leu) + L-leucine + ATP = L-leucyl-tRNA(Leu) + AMP + diphosphate. This is Leucine--tRNA ligase from Rhodospirillum centenum (strain ATCC 51521 / SW).